The primary structure comprises 263 residues: Small ribosomal subunit protein eS4 (263 aa).

The S4 RNA-binding domain occupies 42-104 (LPLIIFLRNR…TGENFRLIYD (63 aa)).

Belongs to the eukaryotic ribosomal protein eS4 family.

This Bos taurus (Bovine) protein is Small ribosomal subunit protein eS4 (RPS4).